Here is a 287-residue protein sequence, read N- to C-terminus: Lactamase-like protein nscB (287 aa).

Residues His62, His64, Asp66, and His67 each contribute to the Zn(2+) site. The active-site Proton donor/acceptor is the Asp66.

This sequence belongs to the metallo-beta-lactamase superfamily. Requires Zn(2+) as cofactor.

Its pathway is secondary metabolite biosynthesis. Functionally, lactamase-like protein; part of the gene cluster that mediates the biosynthesis of neosartoricin B, a prenylated anthracenone that probably exhibits T-cell antiproliferative activity, suggestive of a physiological role as an immunosuppressive agent. The non-reducing polyketide synthase nscA probably synthesizes and cyclizes the decaketide backbone. The hydrolase nscB then mediates the product release through hydrolysis followed by spontaneous decarboxylation. The prenyltransferase nscD catalyzes the addition of the dimethylallyl group to the aromatic C5. The FAD-dependent monooxygenase nscC is then responsible for the stereospecific hydroxylation at C2. Neosartoricin B can be converted into two additional compounds neosartoricins C and D. Neosartoricin C is a spirocyclic compound that is cyclized through the attack of C3 hydroxyl on C14, followed by dehydration. On the other hand, neosartoricin D is a further cyclized compound in which attack of C2 on C14 in neosartoricin C results in the formation of the acetal-containing dioxabicyclo-octanone ring. Both of these compounds are novel and possibly represent related metabolites of the gene cluster. The protein is Lactamase-like protein nscB of Trichophyton verrucosum (strain HKI 0517).